The primary structure comprises 200 residues: Rho-related protein racD (200 aa).

GTP contacts are provided by alanine 20, glycine 22, lysine 23, threonine 24, cysteine 25, tyrosine 39, and threonine 42. Threonine 24 is a binding site for Mg(2+). 2 consecutive short sequence motifs (switch) follow at residues 33-44 (NEFPKDYVPTVF) and 64-82 (DTAG…YPNT). Threonine 42 contacts Mg(2+). 3 residues coordinate GTP: lysine 123, aspartate 125, and alanine 166. A Cysteine methyl ester modification is found at cysteine 197. Cysteine 197 carries S-geranylgeranyl cysteine lipidation. The propeptide at 198-200 (ALL) is removed in mature form.

Belongs to the small GTPase superfamily. Rho family. The cofactor is Mg(2+).

The protein localises to the cell membrane. The protein resides in the cytoplasm. Its subcellular location is the cytoskeleton. The catalysed reaction is GTP + H2O = GDP + phosphate + H(+). Its activity is regulated as follows. Regulated by guanine nucleotide exchange factors (GEFs) which promote the exchange of bound GDP for free GTP, GTPase activating proteins (GAPs) which increase the GTP hydrolysis activity, and GDP dissociation inhibitors which inhibit the dissociation of the nucleotide from the GTPase. Small GTPase which cycles between active GTP-bound and inactive GDP-bound states. This chain is Rho-related protein racD, found in Entamoeba histolytica (strain ATCC 30459 / HM-1:IMSS / ABRM).